Reading from the N-terminus, the 185-residue chain is Large ribosomal subunit protein uL5 (185 aa).

The protein belongs to the universal ribosomal protein uL5 family. As to quaternary structure, part of the 50S ribosomal subunit; part of the 5S rRNA/L5/L18/L25 subcomplex. Contacts the 5S rRNA and the P site tRNA. Forms a bridge to the 30S subunit in the 70S ribosome.

In terms of biological role, this is one of the proteins that bind and probably mediate the attachment of the 5S RNA into the large ribosomal subunit, where it forms part of the central protuberance. In the 70S ribosome it contacts protein S13 of the 30S subunit (bridge B1b), connecting the 2 subunits; this bridge is implicated in subunit movement. Contacts the P site tRNA; the 5S rRNA and some of its associated proteins might help stabilize positioning of ribosome-bound tRNAs. This is Large ribosomal subunit protein uL5 from Caulobacter vibrioides (strain NA1000 / CB15N) (Caulobacter crescentus).